An 829-amino-acid chain; its full sequence is Receptor-type tyrosine-protein phosphatase alpha (829 aa).

The N-terminal stretch at 1–19 (MDSWFILVLFGSGLIHVSA) is a signal peptide. Residues 20-142 (NNATTVSPSL…ETFPPADETP (123 aa)) are Extracellular-facing. N-linked (GlcNAc...) asparagine glycosylation is found at Asn-21, Asn-47, Asn-51, Asn-68, Asn-80, Asn-86, Asn-104, and Asn-124. The interval 79–106 (VNSSHSDNGTRRAASTESGGTTISPNGS) is disordered. The chain crosses the membrane as a helical span at residues 143-166 (IIAVMVALSSLLVIVFIIIVLYML). The Cytoplasmic portion of the chain corresponds to 167–829 (RFKKYKQAGS…DAFSDYANFK (663 aa)). Phosphoserine is present on residues Ser-202 and Ser-204. 2 consecutive Tyrosine-protein phosphatase domains span residues 232 to 528 (FREE…LLEH) and 560 to 818 (LEEE…VQEY). Substrate-binding positions include Asp-437, 469-475 (CSAGVGR), and Gln-513. Catalysis depends on Cys-469, which acts as the Phosphocysteine intermediate. The active-site Phosphocysteine intermediate is Cys-759. Tyr-825 carries the post-translational modification Phosphotyrosine.

It belongs to the protein-tyrosine phosphatase family. Receptor class 4 subfamily. In terms of assembly, part of a complex comprised of PTPRA, BCAR1, BCAR3 (via SH2 domain), and SRC. Within the complex, interacts (when phosphorylated on Tyr-825) with BCAR3 (via SH2 domain). Interacts with GRB2. In terms of processing, integrin binding to extracellular matrix induces phosphorylation at Tyr-825 which induces PTPRA localization and recruitment of BCAR3, BCAR1 and CRK to focal adhesions. As to expression, widely expressed. Highest expression in brain and kidney.

Its subcellular location is the cell membrane. It localises to the cell junction. The protein resides in the focal adhesion. The enzyme catalyses O-phospho-L-tyrosyl-[protein] + H2O = L-tyrosyl-[protein] + phosphate. Functionally, tyrosine protein phosphatase which is involved in integrin-mediated focal adhesion formation. Following integrin engagement, specifically recruits BCAR3, BCAR1 and CRK to focal adhesions thereby promoting SRC-mediated phosphorylation of BRAC1 and the subsequent activation of PAK and small GTPase RAC1 and CDC42. In Mus musculus (Mouse), this protein is Receptor-type tyrosine-protein phosphatase alpha (Ptpra).